The sequence spans 278 residues: Large ribosomal subunit protein uL2c (278 aa).

A disordered region spans residues 222–241 (GVVMNPNDHPHGGGEGRSPI).

The protein belongs to the universal ribosomal protein uL2 family. As to quaternary structure, part of the 50S ribosomal subunit.

Its subcellular location is the plastid. The protein resides in the chloroplast. In Tupiella akineta (Green alga), this protein is Large ribosomal subunit protein uL2c (rpl2).